Consider the following 479-residue polypeptide: U6 small nuclear RNA (adenine-(43)-N(6))-methyltransferase (479 aa).

Residues lysine 82, glycine 108, aspartate 131, threonine 164, and asparagine 184 each coordinate S-adenosyl-L-methionine. The interval 420–424 (DNASQ) is involved in dlc-1 binding.

Belongs to the methyltransferase superfamily. METTL16/RlmF family. In terms of assembly, self-associates. Interacts with dlc-1; the interaction is direct, and is required for nuclear localization of mett-10. Expressed in the intestine, vulva, and cells of the somatic gonad including distal tip cells, gonadal sheath cells and spermatheca.

Its subcellular location is the nucleus. It catalyses the reaction an adenosine in mRNA + S-adenosyl-L-methionine = an N(6)-methyladenosine in mRNA + S-adenosyl-L-homocysteine + H(+). The catalysed reaction is adenosine in U6 snRNA + S-adenosyl-L-methionine = N(6)-methyladenosine in U6 snRNA + S-adenosyl-L-homocysteine + H(+). RNA N6-methyltransferase that methylates adenosine residues at the N(6) position of a subset of RNAs and is involved in S-adenosyl-L-methionine homeostasis by regulating splicing of S-adenosylmethionine synthase transcripts (sams-3, sams-4 and sams-5). Able to N6-methylate a subset of mRNAs containing the 5'UACAGAAAC-3' nonamer sequence. Plays a key role in S-adenosyl-L-methionine homeostasis: under rich-diet conditions, catalyzes N6-methylation of S-adenosylmethionine synthase mRNAs (sams-3, sams-4 and sams-5), directly inhibiting splicing and protein production of S-adenosylmethionine synthase. In addition to mRNAs, also able to mediate N6-methylation of U6 small nuclear RNA (U6 snRNA). Required for gamete production, inhibiting germ cell proliferative fate and ensuring germ cell meiotic development. Also promotes progression of the mitotic cell cycle in those germ cells that continue to proliferate. Plays a role in the development of the vulva, somatic gonad and embryo. In Caenorhabditis elegans, this protein is U6 small nuclear RNA (adenine-(43)-N(6))-methyltransferase.